Here is a 126-residue protein sequence, read N- to C-terminus: Holo-[acyl-carrier-protein] synthase (126 aa).

Mg(2+)-binding residues include aspartate 9 and glutamate 58.

It belongs to the P-Pant transferase superfamily. AcpS family. Requires Mg(2+) as cofactor.

It is found in the cytoplasm. It carries out the reaction apo-[ACP] + CoA = holo-[ACP] + adenosine 3',5'-bisphosphate + H(+). Functionally, transfers the 4'-phosphopantetheine moiety from coenzyme A to a Ser of acyl-carrier-protein. This chain is Holo-[acyl-carrier-protein] synthase, found in Shewanella denitrificans (strain OS217 / ATCC BAA-1090 / DSM 15013).